A 205-amino-acid chain; its full sequence is Recombination protein RecR (205 aa).

A C4-type zinc finger spans residues 58–73; the sequence is CKKCHTISDHELCAIC. Positions 81–177 constitute a Toprim domain; the sequence is RVVCIVEDIR…KISTIARGIP (97 aa).

Belongs to the RecR family.

Functionally, may play a role in DNA repair. It seems to be involved in an RecBC-independent recombinational process of DNA repair. It may act with RecF and RecO. The chain is Recombination protein RecR from Cytophaga hutchinsonii (strain ATCC 33406 / DSM 1761 / CIP 103989 / NBRC 15051 / NCIMB 9469 / D465).